Consider the following 259-residue polypeptide: NADP-dependent 3-hydroxy acid dehydrogenase (259 aa).

Residue I11 coordinates NADP(+). Residue S42 is modified to Phosphoserine. T43 is subject to Phosphothreonine. NADP(+) contacts are provided by D65, N92, R126, Y158, K162, and V191. The Proton acceptor role is filled by Y158. Catalysis depends on K162, which acts as the Lowers pKa of active site Tyr.

Belongs to the short-chain dehydrogenases/reductases (SDR) family. As to quaternary structure, homotetramer.

It is found in the cytoplasm. Its subcellular location is the nucleus. The catalysed reaction is L-allo-threonine + NADP(+) = aminoacetone + CO2 + NADPH. NADP-dependent dehydrogenase with broad substrate specificity acting on 3-hydroxy acids. Catalyzes the NADP-dependent oxidation of L-allo-threonine to L-2-amino-3-keto-butyrate, which is spontaneously decarboxylated into aminoacetone. Also acts on D-threonine, L-serine, D-serine, D-3-hydroxyisobutyrate, L-3-hydroxyisobutyrate, D-glycerate and L-glycerate. This is NADP-dependent 3-hydroxy acid dehydrogenase from Schizosaccharomyces pombe (strain 972 / ATCC 24843) (Fission yeast).